The sequence spans 354 residues: Protein RecA (354 aa).

ATP is bound at residue 65–72 (GPESSGKT).

It belongs to the RecA family.

It is found in the cytoplasm. Its function is as follows. Can catalyze the hydrolysis of ATP in the presence of single-stranded DNA, the ATP-dependent uptake of single-stranded DNA by duplex DNA, and the ATP-dependent hybridization of homologous single-stranded DNAs. It interacts with LexA causing its activation and leading to its autocatalytic cleavage. The polypeptide is Protein RecA (Aeromonas hydrophila subsp. hydrophila (strain ATCC 7966 / DSM 30187 / BCRC 13018 / CCUG 14551 / JCM 1027 / KCTC 2358 / NCIMB 9240 / NCTC 8049)).